We begin with the raw amino-acid sequence, 1486 residues long: Phosphatidylinositol 3-kinase C2 domain-containing subunit gamma (1486 aa).

The region spanning 285-371 is the PI3K-RBD domain; the sequence is KTKFNIHIFI…IQLHLQKSRE (87 aa). A C2 PI3K-type domain is found at 521–669; the sequence is LPSHLSFTVY…SPVTLQIDFP (149 aa). In terms of domain architecture, PIK helical spans 684 to 860; sequence RSNLEEPLKE…QKLLAALQFC (177 aa). The PI3K/PI4K catalytic domain maps to 929-1207; sequence DHDACSYFTS…KIKESLECFP (279 aa). The G-loop stretch occupies residues 935–941; sequence YFTSNAL. The segment at 1071-1079 is catalytic loop; that stretch reads GVCDRHNDN. The tract at residues 1090-1116 is activation loop; that stretch reads HIDFGKFLGHAQTFGGIKRDRAPFIFT. In terms of domain architecture, PX spans 1240-1352; that stretch reads LSTTRSIERA…SFFLSEAVQQ (113 aa). In terms of domain architecture, C2 spans 1369-1486; the sequence is KKPKVQLVIS…KWYPLGNSII (118 aa).

This sequence belongs to the PI3/PI4-kinase family. As to expression, highly expressed in liver, prostate and testis. Lower levels in small intestine, kidney and pancreas.

It localises to the membrane. It catalyses the reaction a 1,2-diacyl-sn-glycero-3-phospho-(1D-myo-inositol 4-phosphate) + ATP = a 1,2-diacyl-sn-glycero-3-phospho-(1D-myo-inositol-3,4-bisphosphate) + ADP + H(+). It carries out the reaction a 1,2-diacyl-sn-glycero-3-phospho-(1D-myo-inositol) + ATP = a 1,2-diacyl-sn-glycero-3-phospho-(1D-myo-inositol-3-phosphate) + ADP + H(+). Generates phosphatidylinositol 3-phosphate (PtdIns3P) and phosphatidylinositol 3,4-bisphosphate (PtdIns(3,4)P2) that act as second messengers. May play a role in SDF1A-stimulated chemotaxis. The polypeptide is Phosphatidylinositol 3-kinase C2 domain-containing subunit gamma (PIK3C2G) (Homo sapiens (Human)).